Here is a 176-residue protein sequence, read N- to C-terminus: NAD(P)H-quinone oxidoreductase subunit 6, chloroplastic (176 aa).

5 helical membrane passes run 10 to 30, 32 to 52, 61 to 81, 93 to 115, and 152 to 172; these read FLLVFLGSGLILGGLGVVLLT, PIYSAFSLGLVFVCISLFYIP, AQLLIYVGAINVLIIFAVMFM, WTVGDGVTSVVCTSIFASLITTI, and FFLPFELISIILLVALIGAIA.

Belongs to the complex I subunit 6 family. As to quaternary structure, NDH is composed of at least 16 different subunits, 5 of which are encoded in the nucleus.

Its subcellular location is the plastid. It is found in the chloroplast thylakoid membrane. The enzyme catalyses a plastoquinone + NADH + (n+1) H(+)(in) = a plastoquinol + NAD(+) + n H(+)(out). The catalysed reaction is a plastoquinone + NADPH + (n+1) H(+)(in) = a plastoquinol + NADP(+) + n H(+)(out). Its function is as follows. NDH shuttles electrons from NAD(P)H:plastoquinone, via FMN and iron-sulfur (Fe-S) centers, to quinones in the photosynthetic chain and possibly in a chloroplast respiratory chain. The immediate electron acceptor for the enzyme in this species is believed to be plastoquinone. Couples the redox reaction to proton translocation, and thus conserves the redox energy in a proton gradient. This chain is NAD(P)H-quinone oxidoreductase subunit 6, chloroplastic (ndhG), found in Vitis vinifera (Grape).